Consider the following 94-residue polypeptide: Neutrophil defensin 1 (94 aa).

The N-terminal stretch at Met-1–Ala-19 is a signal peptide. The propeptide occupies Glu-20–Ala-38. Disulfide bonds link Cys-66–Cys-94, Cys-68–Cys-83, and Cys-73–Cys-93. Residue Arg-78 is modified to ADP-ribosylarginine; by ART1. Tyr-85 carries the post-translational modification Phosphotyrosine. Position 88 is an ADP-ribosylarginine; by ART1 (Arg-88).

It belongs to the alpha-defensin family. Tetramer. Dimer. Interacts with RETN. As to quaternary structure, (Microbial infection) Interacts with HIV-1 surface protein gp120. In terms of assembly, (Microbial infection) Interacts with herpes virus 1 (HHV1) envelope glycoprotein B; this interaction inhibits viral infection. ADP-ribosylation drastically reduces cytotoxic and antibacterial activities, and enhances IL8 production. In terms of processing, phosphorylation at Tyr-85 has been found in some cancer cell lines, and interferes with ADP-ribosylation.

It is found in the secreted. Its function is as follows. Effector molecule of the innate immune system that acts via antibiotic-like properties against a broad array of infectious agents including bacteria, fungi, and viruses or by promoting the activation and maturation of some APCs. Interacts with the essential precursor of cell wall synthesis lipid II to inhibit bacterial cell wall synthesis. Inhibits adenovirus infection via inhibition of viral disassembly at the vertex region, thereby restricting the release of internal capsid protein pVI, which is required for endosomal membrane penetration during cell entry. In addition, interaction with adenovirus capsid leads to the redirection of viral particles to TLR4 thereby promoting a NLRP3-mediated inflammasome response and interleukin 1-beta (IL-1beta) release. Induces the production of proinflammatory cytokines including type I interferon (IFN) in plasmacytoid dendritic cells (pDCs) by triggering the degradation of NFKBIA and nuclear translocation of IRF1, both of which are required for activation of pDCs. The sequence is that of Neutrophil defensin 1 (DEFA1) from Homo sapiens (Human).